The primary structure comprises 698 residues: Probable xyloglucan glycosyltransferase 2 (698 aa).

2 consecutive transmembrane segments (helical) span residues 124–144 (GFLA…WNGW) and 190–210 (ILLF…CFWI). The active site involves D272. The substrate site is built by D331 and D333. The active site involves D425. Transmembrane regions (helical) follow at residues 503–523 (LILP…TMFV), 528–548 (LPVW…ILPS), 653–668 (LALS…RSLL), and 673–693 (IHFY…LDLI).

Belongs to the glycosyltransferase 2 family. Plant cellulose synthase-like C subfamily.

The protein localises to the golgi apparatus membrane. Probable beta-1,4-glucan synthase rather involved in the synthesis of the xyloglucan backbone than cellulose. Seems to work simultaneously with xyloglucan 6-xylosyltransferase. Xyloglucan is a noncellulosic polysaccharides of plant cell wall and consists of a glucan backbone substituted by xylose, galactose and fucose. This Oryza sativa subsp. indica (Rice) protein is Probable xyloglucan glycosyltransferase 2 (CSLC2).